Here is a 362-residue protein sequence, read N- to C-terminus: 3-dehydroquinate synthase (362 aa).

NAD(+)-binding positions include 71-76 (DGEQYK), 105-109 (GVVGD), 129-130 (TT), Lys142, Lys151, and 169-172 (CLKT). Zn(2+)-binding residues include Glu184, His247, and His264.

Belongs to the sugar phosphate cyclases superfamily. Dehydroquinate synthase family. It depends on Co(2+) as a cofactor. The cofactor is Zn(2+). NAD(+) serves as cofactor.

The protein localises to the cytoplasm. It carries out the reaction 7-phospho-2-dehydro-3-deoxy-D-arabino-heptonate = 3-dehydroquinate + phosphate. It participates in metabolic intermediate biosynthesis; chorismate biosynthesis; chorismate from D-erythrose 4-phosphate and phosphoenolpyruvate: step 2/7. In terms of biological role, catalyzes the conversion of 3-deoxy-D-arabino-heptulosonate 7-phosphate (DAHP) to dehydroquinate (DHQ). This is 3-dehydroquinate synthase from Escherichia coli O6:K15:H31 (strain 536 / UPEC).